Here is a 739-residue protein sequence, read N- to C-terminus: Phosphoribosylformylglycinamidine synthase subunit PurL (739 aa).

H54 is an active-site residue. Residues Y57 and K96 each contribute to the ATP site. E98 lines the Mg(2+) pocket. Residues 99–102 (SHNH) and R121 contribute to the substrate site. The Proton acceptor role is filled by H100. D122 provides a ligand contact to Mg(2+). Q245 contacts substrate. D273 serves as a coordination point for Mg(2+). 317–319 (ESQ) serves as a coordination point for substrate. 2 residues coordinate ATP: D500 and G537. Mg(2+) is bound at residue N538. A substrate-binding site is contributed by S540.

The protein belongs to the FGAMS family. In terms of assembly, monomer. Part of the FGAM synthase complex composed of 1 PurL, 1 PurQ and 2 PurS subunits.

The protein localises to the cytoplasm. The enzyme catalyses N(2)-formyl-N(1)-(5-phospho-beta-D-ribosyl)glycinamide + L-glutamine + ATP + H2O = 2-formamido-N(1)-(5-O-phospho-beta-D-ribosyl)acetamidine + L-glutamate + ADP + phosphate + H(+). Its pathway is purine metabolism; IMP biosynthesis via de novo pathway; 5-amino-1-(5-phospho-D-ribosyl)imidazole from N(2)-formyl-N(1)-(5-phospho-D-ribosyl)glycinamide: step 1/2. Part of the phosphoribosylformylglycinamidine synthase complex involved in the purines biosynthetic pathway. Catalyzes the ATP-dependent conversion of formylglycinamide ribonucleotide (FGAR) and glutamine to yield formylglycinamidine ribonucleotide (FGAM) and glutamate. The FGAM synthase complex is composed of three subunits. PurQ produces an ammonia molecule by converting glutamine to glutamate. PurL transfers the ammonia molecule to FGAR to form FGAM in an ATP-dependent manner. PurS interacts with PurQ and PurL and is thought to assist in the transfer of the ammonia molecule from PurQ to PurL. This chain is Phosphoribosylformylglycinamidine synthase subunit PurL, found in Bacillus cytotoxicus (strain DSM 22905 / CIP 110041 / 391-98 / NVH 391-98).